A 421-amino-acid polypeptide reads, in one-letter code: Threonine--tRNA ligase editing subunit (421 aa).

It belongs to the class-II aminoacyl-tRNA synthetase family. Archaea-specific ThrRS editing domain subfamily. Probably interacts with its catalytic subunit.

Its subcellular location is the cytoplasm. Functionally, freestanding tRNA editing subunit of threonine--tRNA ligase, the catalytic subunit is probably AC Q9YDW0. Deacylates (edits) mischarged L-seryl-tRNA(Thr) in trans; has no activity on correctly charged L-threonyl-tRNA(Thr). Probably does not aminoacylate tRNA(Thr). Deacylates correctly charged glycyl-tRNA(Gly), but not glycyl-tRNA(Gly)(2'-dA76) (the terminal 2'-OH of tRNA adenine 76 has been dehydroxylated) nor the 2'-fluoro tRNA derivative, strongly suggesting the editing function is catalyzed by the 2'-OH of A76 of tRNA(Thr). This chain is Threonine--tRNA ligase editing subunit (thrS2), found in Aeropyrum pernix (strain ATCC 700893 / DSM 11879 / JCM 9820 / NBRC 100138 / K1).